The chain runs to 106 residues: UPF0473 protein LCABL_08490 (106 aa).

This sequence belongs to the UPF0473 family.

The polypeptide is UPF0473 protein LCABL_08490 (Lacticaseibacillus casei (strain BL23) (Lactobacillus casei)).